The sequence spans 475 residues: E3 ubiquitin-protein ligase TRIM21 (475 aa).

The RING-type zinc finger occupies 16 to 55; the sequence is CPICLDPFVEPVSIECGHSFCQECISQVGKGGGSVCPVCR. 4 residues coordinate Zn(2+): C92, H95, C114, and H120. The segment at 92 to 123 adopts a B box-type zinc-finger fold; the sequence is CAVHGERLHLFCEKDGKALCWVCAQSRKHRDH. Positions 128–238 form a coiled coil; the sequence is LEEAAQEYQE…ISELDRRCHS (111 aa). S266 carries the phosphoserine modification. In terms of domain architecture, B30.2/SPRY spans 268–465; that stretch reads ELRSVCHVPG…NTAPLTLCPL (198 aa).

It belongs to the TRIM/RBCC family. Homotrimer. Interacts (via C-terminus) with IRF8 (via C-terminus). Component of a SCF(SKP2)-like complex containing CUL1, SKP1, TRIM21 and SKP2. Interacts with CALR, CUL1, FBXW11, HSPA5, IKBKB, IRF3, SKP1 and VCP. Interacts with SKP2; the interaction with SKP2 does not depend on an intact F-box domain. Interacts (via N-terminus and C-terminus) with DCP2 (via N-terminus and C-terminus). Interacts with ULK1, BECN1 and with ATG8 family members, including GABARAP, GABARAPL1, GABARAPL2 and MAP1LC3C/LC3C. Interacts with TRIM21 and SQSTM1/sequestosome 1. Interacts with IRF3. Interacts (via the SPRY domain) with NMI (via coiled-coil domain); the interaction promotes 'Lys-63'-linked ubiquitination of NMI. Interacts with IFI35 and NMI; the interaction facilitates NMI-IFI35 complex formation. In terms of assembly, (Microbial infection) Interacts (via B30.2/SPRY domain) with severe fever with thrombocytopenia syndrome virus (SFTSV) NSs; this interaction activates NFE2L2-mediated transcriptional activation of antioxidant genes. In terms of processing, autoubiquitinated; does not lead to its proteasomal degradation. Deubiquitinated by USP4; leading to its stabilization. In terms of tissue distribution, isoform 1 and isoform 2 are expressed in fetal and adult heart and fetal lung.

The protein localises to the cytoplasm. The protein resides in the cytoplasmic vesicle. Its subcellular location is the autophagosome. It localises to the nucleus. It is found in the P-body. The protein localises to the stress granule. It catalyses the reaction S-ubiquitinyl-[E2 ubiquitin-conjugating enzyme]-L-cysteine + [acceptor protein]-L-lysine = [E2 ubiquitin-conjugating enzyme]-L-cysteine + N(6)-ubiquitinyl-[acceptor protein]-L-lysine.. It participates in protein modification; protein ubiquitination. In terms of biological role, E3 ubiquitin-protein ligase whose activity is dependent on E2 enzymes, UBE2D1, UBE2D2, UBE2E1 and UBE2E2. Forms a ubiquitin ligase complex in cooperation with the E2 UBE2D2 that is used not only for the ubiquitination of USP4 and IKBKB but also for its self-ubiquitination. Component of cullin-RING-based SCF (SKP1-CUL1-F-box protein) E3 ubiquitin-protein ligase complexes such as SCF(SKP2)-like complexes. A TRIM21-containing SCF(SKP2)-like complex is shown to mediate ubiquitination of CDKN1B ('Thr-187' phosphorylated-form), thereby promoting its degradation by the proteasome. Monoubiquitinates IKBKB that will negatively regulates Tax-induced NF-kappa-B signaling. Negatively regulates IFN-beta production post-pathogen recognition by catalyzing polyubiquitin-mediated degradation of IRF3. Mediates the ubiquitin-mediated proteasomal degradation of IgG1 heavy chain, which is linked to the VCP-mediated ER-associated degradation (ERAD) pathway. Promotes IRF8 ubiquitination, which enhanced the ability of IRF8 to stimulate cytokine genes transcription in macrophages. Plays a role in the regulation of the cell cycle progression. Enhances the decapping activity of DCP2. Exists as a ribonucleoprotein particle present in all mammalian cells studied and composed of a single polypeptide and one of four small RNA molecules. At least two isoforms are present in nucleated and red blood cells, and tissue specific differences in RO/SSA proteins have been identified. The common feature of these proteins is their ability to bind HY RNAs.2. Involved in the regulation of innate immunity and the inflammatory response in response to IFNG/IFN-gamma. Organizes autophagic machinery by serving as a platform for the assembly of ULK1, Beclin 1/BECN1 and ATG8 family members and recognizes specific autophagy targets, thus coordinating target recognition with assembly of the autophagic apparatus and initiation of autophagy. Also regulates autophagy through FIP200/RB1CC1 ubiquitination and subsequent decreased protein stability. Represses the innate antiviral response by facilitating the formation of the NMI-IFI35 complex through 'Lys-63'-linked ubiquitination of NMI. During viral infection, promotes cell pyroptosis by mediating 'Lys-6'-linked ubiquitination of ISG12a/IFI27, facilitating its translocation into the mitochondria and subsequent CASP3 activation. When up-regulated through the IFN/JAK/STAT signaling pathway, promotes 'Lys-27'-linked ubiquitination of MAVS, leading to the recruitment of TBK1 and up-regulation of innate immunity. Mediates 'Lys-63'-linked polyubiquitination of G3BP1 in response to heat shock, leading to stress granule disassembly. This Homo sapiens (Human) protein is E3 ubiquitin-protein ligase TRIM21.